Consider the following 242-residue polypeptide: Zinc-finger homeodomain protein 13 (242 aa).

The segment at 64–111 (YYECRKNHAADIGTTAYDGCGEFVSSTGEEDSLNCAACGCHRNFHREE) adopts a ZF-HD dimerization-type; degenerate zinc-finger fold. The segment at 144–166 (GGKSEGKKKKKEKESYGGDPIIK) is disordered. Residues 155-166 (EKESYGGDPIIK) are compositionally biased toward basic and acidic residues. A DNA-binding region (homeobox) is located at residues 179–238 (VKRLKTKFTAEQTEKMRDYAEKLRWKVRPERQEEVEEFCVEIGVNRKNFRIWMNNHKDKI).

Homo- and heterodimer with other ZFHD proteins. Interacts with MIF1, MIF2 and MIF3; these interactions prevent nuclear localization and DNA-binding to inhibit transcription regulation activity. Binds to ZHD11. As to expression, mostly expressed in flowers.

The protein resides in the nucleus. In terms of biological role, putative transcription factor. The sequence is that of Zinc-finger homeodomain protein 13 (ZHD13) from Arabidopsis thaliana (Mouse-ear cress).